The following is a 508-amino-acid chain: MGLPWYRVHTVVLNDPGRLIAVHIMHTALVAGWAGSMALYELAVFDPSDPVLDPMWRQGMFILPFMTRLGIKESWGGWSITGESAVNPGLWSYEGVAGAHIVFSGLCFLSAIWHWVYWDLEIFSDPRTGKPSLDLPKIFGIHLFLSGVACFGFGAFHVTGLYGPGIWVSDPFGLTGRIQPVSPAWGAEGFDPFVPGGIASHHIAAGLLGIIAGLFHLSVRPPQRLYRGLRMGNIETVLSSSIAAVFFAAFIVAGTMWYGSATTPIELFGPTRYQWDQGYFQQEIDRRVRAGLTEKLSLSEAWSRIPEKLAFYDYIGNNPAKGGLFRAGAMDNGDGIAVGWLGHPIFRDKEGNELFVRRMPTFFETFPVVLVNKEGIVKADVPFRRSESKYSVEQVGVTVEFYGGELNGVSFSDPAIVKKYARRAQLGEIFELDRATLKSDGVFRSSPRGWFTFGHATFALLFFFGHIWHGARTLFRDIFAGIDPELDAQVEFGAFQKLGDPTTKRQVV.

6 helical membrane-spanning segments follow: residues 21–36 (AVHIMHTALVAGWAGS), 101–115 (IVFSGLCFLSAIWHW), 140–156 (GIHLFLSGVACFGFGAF), 203–218 (IAAGLLGIIAGLFHLS), 237–252 (VLSSSIAAVFFAAFIV), and 457–472 (TFALLFFFGHIWHGAR).

Belongs to the PsbB/PsbC family. PsbB subfamily. As to quaternary structure, PSII is composed of 1 copy each of membrane proteins PsbA, PsbB, PsbC, PsbD, PsbE, PsbF, PsbH, PsbI, PsbJ, PsbK, PsbL, PsbM, PsbT, PsbX, PsbY, PsbZ, Psb30/Ycf12, at least 3 peripheral proteins of the oxygen-evolving complex and a large number of cofactors. It forms dimeric complexes. Requires Binds multiple chlorophylls. PSII binds additional chlorophylls, carotenoids and specific lipids. as cofactor.

It is found in the plastid. The protein resides in the chloroplast thylakoid membrane. In terms of biological role, one of the components of the core complex of photosystem II (PSII). It binds chlorophyll and helps catalyze the primary light-induced photochemical processes of PSII. PSII is a light-driven water:plastoquinone oxidoreductase, using light energy to abstract electrons from H(2)O, generating O(2) and a proton gradient subsequently used for ATP formation. The chain is Photosystem II CP47 reaction center protein from Gnetum parvifolium (Small-leaved jointfir).